The chain runs to 236 residues: MTGYEARLITFGTWMYFVNKEQLARAGFYAIGQEDKVQCFHCGGGLANWKPKEDPWEQHAKWYPGCKYLLEEKGHEYINNIHLTRSLEGALVQTTKKTPSLTKRINDTIFPNPMLQEAIRMGFDFKDVKKIMEERIQTSGSNYKTLEVLVADLVSAQKDTTENESNQTSLQREISPEEPLRRLQDEKLCKICMDRHIAVVFIPCGHLVTCKQCAEAVDRCPMCSAVIDFKQRVFMS.

One copy of the BIR repeat lies at 7–70 (RLITFGTWMY…KWYPGCKYLL (64 aa)). Zn(2+) contacts are provided by C39, C42, H59, and C66. The segment at 189-224 (CKICMDRHIAVVFIPCGHLVTCKQCAEAVDRCPMCS) adopts an RING-type zinc-finger fold.

This sequence belongs to the IAP family. In terms of assembly, binds to caspase-9.

The protein localises to the cytoplasm. Functionally, protects against apoptosis mediated by BAX. The protein is Baculoviral IAP repeat-containing protein 8 (BIRC8) of Pan troglodytes (Chimpanzee).